Consider the following 228-residue polypeptide: MNLNSIFGQFSPDYFLLMPMTLASMLMAISWLFFSNSTNWLPTRIGFSFLTFNQTIIKTIFQQTNPSSITWVPIITTVFILLFSVNVLGLLPYAFTATSHISLTYSIGIPIWMSVNILGFYLSFNSRLSHLVPQGTPSFLLPLMVIIETLSLFAQPIALGLRLAANLTAGHLLIYLMSTAIWVLMNNVAIASITLIIFILLFLLEIGVACIQAYVFTALIHFYLVQNL.

The next 6 membrane-spanning stretches (helical) occupy residues 14 to 34 (YFLLMPMTLASMLMAISWLFF), 71 to 91 (WVPIITTVFILLFSVNVLGLL), 101 to 121 (ISLTYSIGIPIWMSVNILGFY), 139 to 159 (FLLPLMVIIETLSLFAQPIAL), 165 to 185 (ANLTAGHLLIYLMSTAIWVLM), and 188 to 208 (VAIASITLIIFILLFLLEIGV).

It belongs to the ATPase A chain family. In terms of assembly, F-type ATPases have 2 components, CF(1) - the catalytic core - and CF(0) - the membrane proton channel. CF(1) has five subunits: alpha(3), beta(3), gamma(1), delta(1), epsilon(1). CF(0) has three main subunits: a, b and c.

The protein localises to the mitochondrion inner membrane. Mitochondrial membrane ATP synthase (F(1)F(0) ATP synthase or Complex V) produces ATP from ADP in the presence of a proton gradient across the membrane which is generated by electron transport complexes of the respiratory chain. F-type ATPases consist of two structural domains, F(1) - containing the extramembraneous catalytic core and F(0) - containing the membrane proton channel, linked together by a central stalk and a peripheral stalk. During catalysis, ATP synthesis in the catalytic domain of F(1) is coupled via a rotary mechanism of the central stalk subunits to proton translocation. Key component of the proton channel; it may play a direct role in the translocation of protons across the membrane. This is ATP synthase subunit a (ATP6) from Pisaster ochraceus (Ochre sea star).